Consider the following 160-residue polypeptide: Nucleotide-binding protein MADE_1020535 (160 aa).

It belongs to the YajQ family.

Nucleotide-binding protein. The sequence is that of Nucleotide-binding protein MADE_1020535 from Alteromonas mediterranea (strain DSM 17117 / CIP 110805 / LMG 28347 / Deep ecotype).